A 300-amino-acid polypeptide reads, in one-letter code: Ribosomal protein bS6--L-glutamate ligase (300 aa).

One can recognise an ATP-grasp domain in the interval 104–287; sequence MQLLARQGID…IASKMIRWIE (184 aa). Residues Lys141, 178–179, Asp187, and 211–213 contribute to the ATP site; these read EY and RSN. Residues Asp248, Glu260, and Asn262 each coordinate Mg(2+). The Mn(2+) site is built by Asp248, Glu260, and Asn262.

Belongs to the RimK family. The cofactor is Mg(2+). It depends on Mn(2+) as a cofactor.

Its function is as follows. An L-glutamate ligase that catalyzes the ATP-dependent post-translational addition of glutamate residues to the C-terminus of ribosomal protein bS6 (RpsF). Is also able to catalyze the synthesis of poly-alpha-glutamate in vitro, via ATP hydrolysis from unprotected glutamate as substrate. The number of glutamate residues added to either RpsF or to poly-alpha-glutamate changes with pH. The protein is Ribosomal protein bS6--L-glutamate ligase of Escherichia coli O81 (strain ED1a).